A 124-amino-acid polypeptide reads, in one-letter code: Fluoride-specific ion channel FluC (124 aa).

Helical transmembrane passes span 5–25 (ILAV…TGTW), 38–58 (TLAV…LFLL), 69–89 (GLIV…LDTL), and 99–119 (LALG…WAGL). Residues glycine 76 and threonine 79 each contribute to the Na(+) site.

The protein belongs to the fluoride channel Fluc/FEX (TC 1.A.43) family.

The protein resides in the cell inner membrane. It carries out the reaction fluoride(in) = fluoride(out). Na(+) is not transported, but it plays an essential structural role and its presence is essential for fluoride channel function. Fluoride-specific ion channel. Important for reducing fluoride concentration in the cell, thus reducing its toxicity. In Pseudomonas syringae pv. syringae (strain B728a), this protein is Fluoride-specific ion channel FluC.